Here is a 490-residue protein sequence, read N- to C-terminus: DNA-binding protein D-ETS-3 (490 aa).

Disordered regions lie at residues 190–255 (TASS…SGGG) and 271–294 (SSTQ…SQLR). The span at 196–207 (HVEHKVRADKST) shows a compositional bias: basic and acidic residues. The span at 211-227 (ATTSSHAAAPSSSSSAS) shows a compositional bias: low complexity. A compositionally biased stretch (gly residues) spans 244 to 255 (GTGGGASASGGG). Residues 271–280 (SSTQSQGYSS) show a composition bias toward low complexity. Positions 317-397 (IQLWQFLLEL…HGKRYAYKFD (81 aa)) form a DNA-binding region, ETS.

Belongs to the ETS family. As to expression, embryonic ventral nervous system, higher in the thoracic than abdominal segments.

Its subcellular location is the nucleus. The polypeptide is DNA-binding protein D-ETS-3 (Ets65A) (Drosophila melanogaster (Fruit fly)).